The following is a 932-amino-acid chain: Protocadherin gamma-A12 (932 aa).

The N-terminal stretch at Met1–Thr29 is a signal peptide. Cadherin domains are found at residues Gln30–Phe133, Arg134–Phe242, Ala243–Val347, Val348–Phe452, Pro453–Ile562, and Asp570–Asn683. Residues Gln30–Tyr692 are Extracellular-facing. N-linked (GlcNAc...) asparagine glycosylation is found at Asn265, Asn419, and Asn545. A helical membrane pass occupies residues Leu693 to Ala713. Residues Leu714–Lys932 are Cytoplasmic-facing. Disordered stretches follow at residues Ser803–Asn841 and Ala902–Lys932. Residues Trp816 to Asn841 show a composition bias toward polar residues. Positions Asn922–Lys932 are enriched in basic residues.

It localises to the cell membrane. Its function is as follows. Potential calcium-dependent cell-adhesion protein. May be involved in the establishment and maintenance of specific neuronal connections in the brain. This chain is Protocadherin gamma-A12 (PCDHGA12), found in Homo sapiens (Human).